Reading from the N-terminus, the 138-residue chain is Small ribosomal subunit protein uS11c (138 aa).

This sequence belongs to the universal ribosomal protein uS11 family. Part of the 30S ribosomal subunit.

The protein localises to the plastid. This is Small ribosomal subunit protein uS11c from Cuscuta gronovii (Common dodder).